The primary structure comprises 61 residues: Short neurotoxin 2 (61 aa).

4 cysteine pairs are disulfide-bonded: Cys3-Cys23, Cys17-Cys40, Cys42-Cys53, and Cys54-Cys59.

This sequence belongs to the three-finger toxin family. Short-chain subfamily. Type I alpha-neurotoxin sub-subfamily. In terms of tissue distribution, expressed by the venom gland.

It localises to the secreted. Functionally, binds to muscle nicotinic acetylcholine receptor (nAChR) and inhibit acetylcholine from binding to the receptor, thereby impairing neuromuscular transmission. The protein is Short neurotoxin 2 of Hemachatus haemachatus (Rinkhals).